A 321-amino-acid polypeptide reads, in one-letter code: MNLKVVYFGTPTFAATVLQDLLHHKIQITAVVTRVDKPQKRSAQLIPSPVKTIALTHGLPLLQPSKASDPQFIEELRAFNADVFIVVAYGAILRQIVLDIPRYGCYNLHAGLLPAYRGAAPIQRCIMEGATESGNTVIRMDAGMDTGDMANITRVPIGPDMTSGELADALASQGAEVLIKTLQQIESGQLQLVSQDAALATIAPKLSKEEGQVPWDKPAKEAYAHIRGVTPAPGAWTLFSFSEKAPKRLMIRKASLLAEAGRYGAPGTVVVTDRQELAIACSEGAICLHEVQVEGKGSTNSKSFLNGYPAKKLKIVFTLNN.

Residue 111–114 (GLLP) participates in (6S)-5,6,7,8-tetrahydrofolate binding.

It belongs to the Fmt family.

The catalysed reaction is L-methionyl-tRNA(fMet) + (6R)-10-formyltetrahydrofolate = N-formyl-L-methionyl-tRNA(fMet) + (6S)-5,6,7,8-tetrahydrofolate + H(+). In terms of biological role, attaches a formyl group to the free amino group of methionyl-tRNA(fMet). The formyl group appears to play a dual role in the initiator identity of N-formylmethionyl-tRNA by promoting its recognition by IF2 and preventing the misappropriation of this tRNA by the elongation apparatus. The polypeptide is Methionyl-tRNA formyltransferase (Chlamydia pneumoniae (Chlamydophila pneumoniae)).